A 151-amino-acid chain; its full sequence is Deoxyuridine 5'-triphosphate nucleotidohydrolase (151 aa).

Substrate-binding positions include 70–72 (RSG), N83, 87–89 (LID), and M97.

This sequence belongs to the dUTPase family. Mg(2+) serves as cofactor.

The catalysed reaction is dUTP + H2O = dUMP + diphosphate + H(+). It participates in pyrimidine metabolism; dUMP biosynthesis; dUMP from dCTP (dUTP route): step 2/2. This enzyme is involved in nucleotide metabolism: it produces dUMP, the immediate precursor of thymidine nucleotides and it decreases the intracellular concentration of dUTP so that uracil cannot be incorporated into DNA. The protein is Deoxyuridine 5'-triphosphate nucleotidohydrolase of Pseudomonas syringae pv. syringae (strain B728a).